Consider the following 439-residue polypeptide: Xaa-Pro dipeptidase (439 aa).

Positions 244, 255, 335, 380, and 419 each coordinate Mn(2+).

This sequence belongs to the peptidase M24B family. Bacterial-type prolidase subfamily. Requires Mn(2+) as cofactor.

It carries out the reaction Xaa-L-Pro dipeptide + H2O = an L-alpha-amino acid + L-proline. Splits dipeptides with a prolyl residue in the C-terminal position. The chain is Xaa-Pro dipeptidase from Shewanella sediminis (strain HAW-EB3).